The primary structure comprises 247 residues: Osmotin-like protein OSML81 (247 aa).

The N-terminal stretch at 1 to 21 (MGYLRSSFIFSLLAFVTYTYA) is a signal peptide. 8 disulfide bridges follow: Cys-30–Cys-225, Cys-72–Cys-82, Cys-87–Cys-93, Cys-141–Cys-213, Cys-146–Cys-196, Cys-154–Cys-164, Cys-168–Cys-177, and Cys-178–Cys-183.

The protein belongs to the thaumatin family.

This Solanum commersonii (Commerson's wild potato) protein is Osmotin-like protein OSML81.